Reading from the N-terminus, the 196-residue chain is MADS-box protein FLOWERING LOCUS C (196 aa).

Residues 1–61 (MGRKKLEIKR…GKLYSFSSGD (61 aa)) form the MADS-box domain. The short motif at 8 to 15 (IKRIENKS) is the Nuclear localization signal element. Positions 80 to 170 (ALDHQSKALN…ASQMENNHHV (91 aa)) constitute a K-box domain.

As to expression, high expression in the vegetative apex and in root tissue and lower expression in leaves and stems. Not detected in young tissues of the inflorescence. Before fertilization, expressed in ovules, but not in pollen or stamens, of non-vernalized plants. After vernalization, not detected in ovules.

The protein resides in the nucleus. Putative transcription factor that seems to play a central role in the regulation of flowering time in the late-flowering phenotype by interacting with 'FRIGIDA', the autonomous and the vernalization flowering pathways. Inhibits flowering by repressing 'SUPPRESSOR OF OVEREXPRESSION OF CONSTANS 1'. At elevated temperatures (e.g. 29 degrees Celsius), maintained at high levels in a JMJ30/JMJ32-dependent manner to prevent extreme precocious flowering. The chain is MADS-box protein FLOWERING LOCUS C from Arabidopsis thaliana (Mouse-ear cress).